Here is a 260-residue protein sequence, read N- to C-terminus: Carbonic anhydrase 2 (260 aa).

Ser-2 bears the N-acetylserine mark. Ser-2 is modified (phosphoserine). In terms of domain architecture, Alpha-carbonic anhydrase spans His-3 to Phe-259. Catalysis depends on His-64, which acts as the Proton donor/acceptor. Positions 94, 96, and 119 each coordinate Zn(2+). Residues Ser-165 and Ser-172 each carry the phosphoserine modification. Residue Thr-198 to Thr-199 participates in substrate binding.

Belongs to the alpha-carbonic anhydrase family. Interacts with SLC4A4. Interaction with SLC4A7 regulates SLC4A7 transporter activity. Interacts with SLC26A6 isoform 4 (via C-terminus cytoplasmic domain). Zn(2+) serves as cofactor. Co(2+) is required as a cofactor.

It is found in the cytoplasm. The protein localises to the cell membrane. It carries out the reaction hydrogencarbonate + H(+) = CO2 + H2O. The enzyme catalyses urea = cyanamide + H2O. Its activity is regulated as follows. Activated by X-ray, histamine, L-adrenaline, L- and D-phenylalanine, L- and D-histidine, L-His-OMe and beta-Ala-His (carnosine). Competitively inhibited by saccharin, thioxolone, coumarins, 667-coumate, celecoxib (Celebrex), valdecoxib (Bextra), SC-125, SC-560, diclofenac, acetate, azide, bromide, sulfonamide derivatives such as acetazolamide (AZA), methazolamide (MZA), ethoxzolamide (EZA), dichlorophenamide (DCP), brinzolamide, dansylamide, thiabendazole-5-sulfonamide, trifluoromethane sulfonamide and N-hydroxysulfamide, fructose-based sugar sulfamate RWJ-37497, and Foscarnet (phosphonoformate trisodium salt). Repressed strongly by hydrogen sulfide(HS) and weakly by nitrate (NO(3)). Esterase activity weakly reduced by cyanamide. N-hydroxyurea interferes with zinc binding and inhibit activity. In terms of biological role, catalyzes the reversible hydration of carbon dioxide. Can also hydrate cyanamide to urea. Stimulates the chloride-bicarbonate exchange activity of SLC26A6. Essential for bone resorption and osteoclast differentiation. Involved in the regulation of fluid secretion into the anterior chamber of the eye. Contributes to intracellular pH regulation in the duodenal upper villous epithelium during proton-coupled peptide absorption. This Homo sapiens (Human) protein is Carbonic anhydrase 2 (CA2).